Consider the following 410-residue polypeptide: 3-phenylpropionate/cinnamic acid dioxygenase ferredoxin--NAD(+) reductase component (410 aa).

5-36 (TIIIVGGGQAAAMAAASLRQQGFTGELHLFSD) contributes to the FAD binding site. 146–184 (SVVIVGAGTIGLELAASATQRSAAQRSAAQRRCKVTVIE) provides a ligand contact to NAD(+).

This sequence belongs to the bacterial ring-hydroxylating dioxygenase ferredoxin reductase family. This dioxygenase system consists of four proteins: the two subunits of the hydroxylase component (HcaE and HcaF), a ferredoxin (HcaC) and a ferredoxin reductase (HcaD). It depends on FAD as a cofactor.

The catalysed reaction is 2 reduced [2Fe-2S]-[ferredoxin] + NAD(+) + H(+) = 2 oxidized [2Fe-2S]-[ferredoxin] + NADH. The protein operates within aromatic compound metabolism; 3-phenylpropanoate degradation. Its function is as follows. Part of the multicomponent 3-phenylpropionate dioxygenase, that converts 3-phenylpropionic acid (PP) and cinnamic acid (CI) into 3-phenylpropionate-dihydrodiol (PP-dihydrodiol) and cinnamic acid-dihydrodiol (CI-dihydrodiol), respectively. In Shigella flexneri serotype 5b (strain 8401), this protein is 3-phenylpropionate/cinnamic acid dioxygenase ferredoxin--NAD(+) reductase component.